A 482-amino-acid polypeptide reads, in one-letter code: UDP-N-acetylmuramoyl-L-alanyl-D-glutamate--2,6-diaminopimelate ligase (482 aa).

The UDP-N-acetyl-alpha-D-muramoyl-L-alanyl-D-glutamate site is built by L28 and S30. ATP is bound at residue 108-114; it reads GTNGKTT. UDP-N-acetyl-alpha-D-muramoyl-L-alanyl-D-glutamate contacts are provided by residues 150–151, S177, Q183, and R185; that span reads TT. K217 is modified (N6-carboxylysine). Meso-2,6-diaminopimelate is bound by residues R372, 396 to 399, G447, and E451; that span reads DNPR. A Meso-diaminopimelate recognition motif motif is present at residues 396–399; sequence DNPR.

This sequence belongs to the MurCDEF family. MurE subfamily. The cofactor is Mg(2+). Carboxylation is probably crucial for Mg(2+) binding and, consequently, for the gamma-phosphate positioning of ATP.

It localises to the cytoplasm. The catalysed reaction is UDP-N-acetyl-alpha-D-muramoyl-L-alanyl-D-glutamate + meso-2,6-diaminopimelate + ATP = UDP-N-acetyl-alpha-D-muramoyl-L-alanyl-gamma-D-glutamyl-meso-2,6-diaminopimelate + ADP + phosphate + H(+). It functions in the pathway cell wall biogenesis; peptidoglycan biosynthesis. Catalyzes the addition of meso-diaminopimelic acid to the nucleotide precursor UDP-N-acetylmuramoyl-L-alanyl-D-glutamate (UMAG) in the biosynthesis of bacterial cell-wall peptidoglycan. The protein is UDP-N-acetylmuramoyl-L-alanyl-D-glutamate--2,6-diaminopimelate ligase of Aquifex aeolicus (strain VF5).